The chain runs to 601 residues: Replication protein A 70 kDa DNA-binding subunit (601 aa).

The interval 107-172 (MPGKIGDPTP…NTPGGSSKVV (66 aa)) is disordered. A compositionally biased stretch (low complexity) spans 124-135 (APSTAPAPTARP). Positions 137 to 153 (QPQNGSDGSTYRPSAQS) are enriched in polar residues. A DNA-binding region (OB) is located at residues 184–268 (WTIRARVTNK…LKNDYEMTLN (85 aa)). A Phosphoserine modification is found at S370. The C4-type zinc-finger motif lies at 466–488 (CPSKDCNKKVVDQQNGMFRCEKC).

Belongs to the replication factor A protein 1 family. As to quaternary structure, component of the heterotrimeric canonical replication protein A complex (RPA).

Its subcellular location is the nucleus. It is found in the PML body. In terms of biological role, as part of the heterotrimeric replication protein A complex (RPA/RP-A), binds and stabilizes single-stranded DNA intermediates, that form during DNA replication or upon DNA stress. It prevents their reannealing and in parallel, recruits and activates different proteins and complexes involved in DNA metabolism. Thereby, it plays an essential role both in DNA replication and the cellular response to DNA damage. In Danio rerio (Zebrafish), this protein is Replication protein A 70 kDa DNA-binding subunit (rpa1).